A 616-amino-acid polypeptide reads, in one-letter code: Carboxylic acid transporter protein homolog (616 aa).

The segment covering 1–11 (MSSSITDEKIS) has biased composition (basic and acidic residues). The tract at residues 1–65 (MSSSITDEKI…LYHNPSLPAQ (65 aa)) is disordered. Serine 2 carries the post-translational modification N-acetylserine. The Cytoplasmic portion of the chain corresponds to 2–140 (SSSITDEKIS…LRKMTWQNWN (139 aa)). Serine 4 is modified (phosphoserine). Lysine 9 is covalently cross-linked (Glycyl lysine isopeptide (Lys-Gly) (interchain with G-Cter in ubiquitin)). 3 positions are modified to phosphoserine: serine 11, serine 61, and serine 66. Threonine 70 is subject to Phosphothreonine. The helical transmembrane segment at 141–161 (YFFMGYFAWLSAAWAFFCVSV) threads the bilayer. Topologically, residues 162 to 176 (SVAPLAELYDRPTKD) are extracellular. A helical transmembrane segment spans residues 177–197 (ITWGLGLVLFVRSAGAVIFGL). Over 198–205 (WTDKSSRK) the chain is Cytoplasmic. A helical transmembrane segment spans residues 206–226 (WPYITCLFLFVIAQLCTPWCD). Over 227-230 (TYEK) the chain is Extracellular. The helical transmembrane segment at 231-251 (FLGVRWITGIAMGGIYGCASA) threads the bilayer. At 252-263 (TAIEDAPVKARS) the chain is on the cytoplasmic side. A helical transmembrane segment spans residues 264 to 284 (FLSGLFFSAYAMGFIFAIIFY). Residues 285-296 (RAFGYFRDDGWK) lie on the Extracellular side of the membrane. The helical transmembrane segment at 297-317 (ILFWFSIFLPILLIFWRLLWP) threads the bilayer. At 318–363 (ETKYFTKVLKARKLILSDAVKANGGEPLPKANFKQKMVSMKRTVQK) the chain is on the cytoplasmic side. Lysine 338 is covalently cross-linked (Glycyl lysine isopeptide (Lys-Gly) (interchain with G-Cter in ubiquitin)). Residues 364–384 (YWLLFAYLVVLLVGPNYLTHA) traverse the membrane as a helical segment. The Extracellular portion of the chain corresponds to 385–402 (SQDLLPTMLRAQLGLSKD). A helical transmembrane segment spans residues 403 to 423 (AVTVIVVVTNIGAICGGMIFG). Residues 424–432 (QFMEVTGRR) lie on the Cytoplasmic side of the membrane. A helical membrane pass occupies residues 433-453 (LGLLIACTMGGCFTYPAFMLR). The Extracellular segment spans residues 454-457 (SEKA). A helical membrane pass occupies residues 458 to 478 (ILGAGFMLYFCVFGVWGILPI). Residues 479–489 (HLAELAPADAR) lie on the Cytoplasmic side of the membrane. The helical transmembrane segment at 490 to 510 (ALVAGLSYQLGNLASAAASTI) threads the bilayer. The Extracellular segment spans residues 511 to 535 (ETQLADRYPLERDASGAVIKEDYAK). A helical membrane pass occupies residues 536 to 556 (VMAILTGSVFIFTFACVFVGH). Over 557-616 (EKFHRDLSSPVMKKYINQVEEYEADGLSISDIVEQKTECASVKMIDSNVSKTYEEHIETV) the chain is Cytoplasmic. 3 positions are modified to phosphoserine: serine 584, serine 603, and serine 606.

Belongs to the major facilitator superfamily. Sugar transporter (TC 2.A.1.1) family.

The protein resides in the membrane. Functionally, essential to lactate transport. The polypeptide is Carboxylic acid transporter protein homolog (JEN1) (Saccharomyces cerevisiae (strain ATCC 204508 / S288c) (Baker's yeast)).